The primary structure comprises 159 residues: Growth arrest and DNA damage-inducible protein GADD45 gamma (159 aa).

Residues 43–86 form a homodimerization region; it reads VYESAKVLNVDPDNVTFCVLAADEEDEGDIALQIHFTLIQAFCC.

It belongs to the GADD45 family. Undergoes concentration-dependent homodimerization, which is required for growth inhibititory activity and enhances interaction with PCNA. Interacts with GADD45GIP1. Interacts with PCNA.

Involved in the regulation of growth and apoptosis. Mediates activation of stress-responsive MTK1/MEKK4 MAPKKK. The sequence is that of Growth arrest and DNA damage-inducible protein GADD45 gamma (Gadd45g) from Rattus norvegicus (Rat).